Reading from the N-terminus, the 379-residue chain is Cytochrome b (379 aa).

Helical transmembrane passes span 33–53 (FGSL…FLAM), 77–98 (WLIR…FIHV), 113–133 (WNIG…GYVL), and 178–198 (FFAF…VHLL). Positions 83 and 97 each coordinate heme b. H182 and H196 together coordinate heme b. H201 contributes to the a ubiquinone binding site. A run of 4 helical transmembrane segments spans residues 226–246 (IKDL…ALFF), 288–308 (LGGV…PLLN), 320–340 (ITQT…WIGG), and 347–367 (FTMX…ILMP).

It belongs to the cytochrome b family. As to quaternary structure, the cytochrome bc1 complex contains 11 subunits: 3 respiratory subunits (MT-CYB, CYC1 and UQCRFS1), 2 core proteins (UQCRC1 and UQCRC2) and 6 low-molecular weight proteins (UQCRH/QCR6, UQCRB/QCR7, UQCRQ/QCR8, UQCR10/QCR9, UQCR11/QCR10 and a cleavage product of UQCRFS1). This cytochrome bc1 complex then forms a dimer. It depends on heme b as a cofactor.

It is found in the mitochondrion inner membrane. Its function is as follows. Component of the ubiquinol-cytochrome c reductase complex (complex III or cytochrome b-c1 complex) that is part of the mitochondrial respiratory chain. The b-c1 complex mediates electron transfer from ubiquinol to cytochrome c. Contributes to the generation of a proton gradient across the mitochondrial membrane that is then used for ATP synthesis. The chain is Cytochrome b (MT-CYB) from Necromys amoenus (Pleasant bolo mouse).